Consider the following 824-residue polypeptide: FT-interacting protein 1 (824 aa).

C2 domains follow at residues 48–170 (WLGL…PQWY), 217–341 (VRGE…SRWF), and 385–522 (YISD…THAY). The next 3 membrane-spanning stretches (helical) occupy residues 625-645 (AVSL…VCHW), 657-677 (LLLI…LYMF), and 764-784 (ATCL…VTPF).

This sequence belongs to the MCTP family. In terms of assembly, interacts with RFT1 and PI4KG4. Specifically expressed in the phloem including companion cells.

It is found in the endoplasmic reticulum membrane. Involved in the export of the long day-specific flower-promoting signal (florigen) RFT1 from the phloem companion cells to sieve elements. Promotes flowering under long days through the transport of RFT1 from the leaves to the shoot apical meristem (SAM). The sequence is that of FT-interacting protein 1 from Oryza sativa subsp. japonica (Rice).